Consider the following 210-residue polypeptide: Dephospho-CoA kinase (210 aa).

Residues 4 to 202 enclose the DPCK domain; the sequence is WVGLTGGIGS…AFYSGIFASK (199 aa). 12 to 17 is an ATP binding site; it reads GSGKSA.

The protein belongs to the CoaE family.

The protein resides in the cytoplasm. The catalysed reaction is 3'-dephospho-CoA + ATP = ADP + CoA + H(+). It participates in cofactor biosynthesis; coenzyme A biosynthesis; CoA from (R)-pantothenate: step 5/5. Catalyzes the phosphorylation of the 3'-hydroxyl group of dephosphocoenzyme A to form coenzyme A. The polypeptide is Dephospho-CoA kinase (Neisseria meningitidis serogroup A / serotype 4A (strain DSM 15465 / Z2491)).